The primary structure comprises 724 residues: Coiled-coil domain-containing protein 175 (724 aa).

Coiled coils occupy residues 131–164 (VEMS…NTAL), 203–256 (INLE…RKET), 282–373 (VVLS…RQYK), 426–534 (ELHR…ERKL), and 565–627 (QLQV…QLRE).

The polypeptide is Coiled-coil domain-containing protein 175 (CCDC175) (Bos taurus (Bovine)).